We begin with the raw amino-acid sequence, 156 residues long: Ribonuclease H (156 aa).

An RNase H type-1 domain is found at 3 to 144; it reads ELKQIRIYTD…CDTLAREAAE (142 aa). Residues Asp12, Glu50, Asp72, and Asp136 each contribute to the Mg(2+) site.

It belongs to the RNase H family. As to quaternary structure, monomer. Mg(2+) is required as a cofactor.

It localises to the cytoplasm. The enzyme catalyses Endonucleolytic cleavage to 5'-phosphomonoester.. Endonuclease that specifically degrades the RNA of RNA-DNA hybrids. The protein is Ribonuclease H of Shewanella amazonensis (strain ATCC BAA-1098 / SB2B).